The following is a 443-amino-acid chain: Fatty acid desaturase 3 (443 aa).

Topologically, residues 1–130 (MGGVGEPDWE…EDMKLFEAKP (130 aa)) are cytoplasmic. One can recognise a Cytochrome b5 heme-binding domain in the interval 18-95 (LPTLRWEQVR…LQPLLIGELA (78 aa)). Residues 131–151 (AFFGLLLGHILAMEVLAWLMI) traverse the membrane as a helical segment. Tyr-152 is a topological domain (lumenal). A helical membrane pass occupies residues 153–173 (MLGPGWVPSTLAALILAISQA). Residues 174-259 (QSWCLQHDLG…KKKRRYLPYN (86 aa)) are Cytoplasmic-facing. Residues 180 to 184 (HDLGH) carry the Histidine box-1 motif. The short motif at 217–221 (HFQHH) is the Histidine box-2 element. A helical transmembrane segment spans residues 260 to 280 (HQHLYFFLIGPPLLTLVNFEV). The Lumenal segment spans residues 281–282 (EN). The helical transmembrane segment at 283–303 (LAYMLVCMQWMDLLWAASFYA) threads the bilayer. Residue Arg-304 is a topological domain, cytoplasmic. A helical transmembrane segment spans residues 305-325 (FLLSYIPFYGIPGALLLFVAV). Topologically, residues 326-443 (RVLESHWFVW…NVWLEAYLHQ (118 aa)) are lumenal. A Histidine box-3 motif is present at residues 381–385 (QIEHH).

The protein belongs to the fatty acid desaturase type 1 family.

The protein localises to the endoplasmic reticulum membrane. It carries out the reaction an N-acylsphing-4-enine + 2 Fe(II)-[cytochrome b5] + O2 + 2 H(+) = an N-acyl-sphinga-4E,14Z-dienine + 2 Fe(III)-[cytochrome b5] + 2 H2O. The catalysed reaction is N-(hexanoyl)sphing-4-enine + 2 Fe(II)-[cytochrome b5] + O2 + 2 H(+) = N-hexanoyl-sphinga-4E,14Z-dienine + 2 Fe(III)-[cytochrome b5] + 2 H2O. It catalyses the reaction sphing-4-enine + 2 Fe(II)-[cytochrome b5] + O2 + 2 H(+) = sphinga-4E,14Z-dienine + 2 Fe(III)-[cytochrome b5] + 2 H2O. The enzyme catalyses (11E)-octadecenoyl-CoA + 2 Fe(II)-[cytochrome b5] + O2 + 2 H(+) = (11E,13Z)-octadecadienoyl-CoA + 2 Fe(III)-[cytochrome b5] + 2 H2O. It carries out the reaction N-acyl-1-deoxysphinganine + 2 Fe(II)-[cytochrome b5] + O2 + 2 H(+) = N-acyl-1-deoxysphing-14Z-enine + 2 Fe(III)-[cytochrome b5] + 2 H2O. The catalysed reaction is an N-acylsphinganine + 2 Fe(II)-[cytochrome b5] + O2 + 2 H(+) = an N-acylsphing-14Z-enine + 2 Fe(III)-[cytochrome b5] + 2 H2O. Its pathway is lipid metabolism; polyunsaturated fatty acid biosynthesis. It participates in lipid metabolism; sphingolipid metabolism. Functionally, mammals have different sphingoid bases that differ in their length and/or pattern of desaturation and hydroxyl groups. The predominant sphingoid base that comprises mammalian ceramides is sphing-4-enine (sphingosine or SPH) which has a trans (E) desaturation at carbon 4. FADS3 is a desaturase that introduces a cis (Z) double bond between carbon 14 and carbon 15 of the sphingoid base (also known as long chain base, LCB), producing LCBs such as sphinga-4,14-dienine (SPD, d18:2(4E,14Z)) from SPH. Prefers SPH-containing ceramides (N-acylsphing-4-enines) as substrates. Capable of metabolizing also the SPH in its free form. SPD ceramides occur widely in mammalian tissues and cells. Due to their unusual structure containing a cis double bond, SPD ceramides may have an opposite, negative role in lipid microdomain formation relative to conventional ceramides. Could be involved in the detoxification of 1-deoxy sphingolipids, by desaturating the cytotoxic 1-deoxysphinganine (1-deoxySA, m18:0), produced under pathological conditions, to 1-deoxysphingenine (1-deoxysphingosine, 1-deoxySO, m18:1). Although prefers SPH-containing ceramides (N-acylsphing-4-enines) as substrates, it also exhibits activity toward dihydrosphingosine-containing CERs (N-acylsphinganines) and produces 14Z-SPH-containing sphingolipids. Its desaturase mechanism involves an electron transfer facilitated by cytochrome b5. FADS3 also acts as a methyl-end fatty acyl coenzyme A (CoA) desaturase that introduces a cis double bond between the preexisting double bond and the terminal methyl group of the fatty acyl chain. Desaturates (11E)-octadecenoate (trans-vaccenoate, the predominant trans fatty acid in human milk) at carbon 13 to generate (11E,13Z)-octadecadienoate (also known as conjugated linoleic acid 11E,13Z-CLA). In Bos taurus (Bovine), this protein is Fatty acid desaturase 3.